The chain runs to 423 residues: Aspartic protease-like protein pytH (423 aa).

The first 16 residues, 1–16 (MWLSVALLTLLDGALA), serve as a signal peptide directing secretion. Positions 38-416 (TTDAIQIGTP…DFDKLRVGLA (379 aa)) constitute a Peptidase A1 domain. Residue aspartate 56 is part of the active site. N-linked (GlcNAc...) asparagine glycosylation is found at asparagine 88, asparagine 97, asparagine 168, asparagine 196, asparagine 231, and asparagine 279. Residue aspartate 291 is part of the active site. Asparagine 330 carries N-linked (GlcNAc...) asparagine glycosylation. A disulfide bond links cysteine 338 and cysteine 377.

The protein belongs to the peptidase A1 family.

It functions in the pathway secondary metabolite biosynthesis. In terms of biological role, aspartic protease-like protein; part of the gene cluster that mediates the biosynthesis of pyranterreones, a family of antioxidative compounds. The first step of pyranonigrins biosynthesis is performed by the hybrid PKS-NRPS synthetase pytA that condenses 4 malonyl-CoA units ato the acetyl starter unit by the modular PKS of pytA. The acyl chain is then connected to an L-serine through the amide bond by the modular NRPS of pytA. A tetramic acid is formed and released from the PKS-NRPS pytA to give pyranterreone 5 with the help of the thioesterase pytI. Pyranterreone 5 could be methylated by pytC to afford pyranterreone 6. Both pyranterreones 5 and 6 are subsequently oxidized by the FAD-linked oxidoreductase pytB and the cytochrome P450 monooxygenase pytD to form the fused gamma-pyrone core, resulting in pyranterreones 7 and 11, respectively. The hydroxy group at C-8 of pyranterreones 7 and 11 are dehydrated by the aspartyl protease pytH to form a delta-7 double bond to give pyranterreones 3 and 1, 2 accordingly. The exo-methylene of pyranterreone 3 could be reduced into a pendant methyl by reductase pytE to provide pyranterreone 4, also known as cordylactam. Pyranterreone 4 can be reconverted to pyranterreone 3 through pytB-catalyzed dehydrogenation or further oxidized to pyranterreones 9 and 10. The sequence is that of Aspartic protease-like protein pytH from Aspergillus terreus (strain NIH 2624 / FGSC A1156).